The primary structure comprises 465 residues: MKLWGGRFKKGTDELVNDFNSSINIDSRMYKEDIEGSLAHASMLGEQNIISKEDSLKITSGLLEILKRMDNDVINIDLTSEDIHSFVESTLTYYIGEYGKMLHTARSRNDQVTLDLKLYLKKALVKLRKDILYLEEVLLEKSKEHISTIMPGYTHMQKAQPITLSHHLLAYAEMFKRDIGRINDAYKRTDEMPLGSGALATSTYPIDRYMVAKDLGFSKITLNSLDSVSDRDYVIETLSALSLIMMHLSRFSEEIILWCTGEFNFVELDDSYSTGSSIMPQKKNPDVAELIRGKTGRVYGDLITLLTVMKGIPLAYNKDMQEDKEALFDALDTVTLSLKTFAGMIKTMKINKDNMKKSAALGFTNATDLADYLVKKGSYFRDAHGIVGQIVLQCIKDNKMIEDLTLAELKEYSPTFEEDVYDAINLYTCVEERKVIGGPSRESVKFQIKELQEFIHQFKGDEIYD.

This sequence belongs to the lyase 1 family. Argininosuccinate lyase subfamily.

The protein resides in the cytoplasm. The catalysed reaction is 2-(N(omega)-L-arginino)succinate = fumarate + L-arginine. It functions in the pathway amino-acid biosynthesis; L-arginine biosynthesis; L-arginine from L-ornithine and carbamoyl phosphate: step 3/3. In Clostridium botulinum (strain Alaska E43 / Type E3), this protein is Argininosuccinate lyase.